Reading from the N-terminus, the 402-residue chain is Phosphoglycerate kinase (402 aa).

Substrate contacts are provided by residues 24-26, Arg-39, 62-65, Arg-121, and Arg-161; these read DLN and HLGR. ATP-binding positions include Lys-211, Gly-299, Glu-330, and 359 to 362; that span reads GGDS.

The protein belongs to the phosphoglycerate kinase family. As to quaternary structure, monomer.

It localises to the cytoplasm. It carries out the reaction (2R)-3-phosphoglycerate + ATP = (2R)-3-phospho-glyceroyl phosphate + ADP. The protein operates within carbohydrate degradation; glycolysis; pyruvate from D-glyceraldehyde 3-phosphate: step 2/5. In Mycolicibacterium gilvum (strain PYR-GCK) (Mycobacterium gilvum (strain PYR-GCK)), this protein is Phosphoglycerate kinase.